The following is a 414-amino-acid chain: Dual-specificity RNA methyltransferase RlmN (414 aa).

Positions 1 to 20 are enriched in low complexity; sequence MMSTPETATEATAPEAAPAP. The tract at residues 1–24 is disordered; sequence MMSTPETATEATAPEAAPAPSLGA. The Proton acceptor role is filled by Glu129. Positions 135-385 constitute a Radical SAM core domain; sequence ESDRGTLCVS…VRTPRGRDIL (251 aa). An intrachain disulfide couples Cys142 to Cys388. The [4Fe-4S] cluster site is built by Cys149, Cys153, and Cys156. Residues 214-215, Ser246, 268-270, and Asn345 each bind S-adenosyl-L-methionine; these read GE and SLH. Residue Cys388 is the S-methylcysteine intermediate of the active site.

Belongs to the radical SAM superfamily. RlmN family. [4Fe-4S] cluster serves as cofactor.

The protein resides in the cytoplasm. It catalyses the reaction adenosine(2503) in 23S rRNA + 2 reduced [2Fe-2S]-[ferredoxin] + 2 S-adenosyl-L-methionine = 2-methyladenosine(2503) in 23S rRNA + 5'-deoxyadenosine + L-methionine + 2 oxidized [2Fe-2S]-[ferredoxin] + S-adenosyl-L-homocysteine. It carries out the reaction adenosine(37) in tRNA + 2 reduced [2Fe-2S]-[ferredoxin] + 2 S-adenosyl-L-methionine = 2-methyladenosine(37) in tRNA + 5'-deoxyadenosine + L-methionine + 2 oxidized [2Fe-2S]-[ferredoxin] + S-adenosyl-L-homocysteine. Specifically methylates position 2 of adenine 2503 in 23S rRNA and position 2 of adenine 37 in tRNAs. m2A2503 modification seems to play a crucial role in the proofreading step occurring at the peptidyl transferase center and thus would serve to optimize ribosomal fidelity. The chain is Dual-specificity RNA methyltransferase RlmN from Xanthobacter autotrophicus (strain ATCC BAA-1158 / Py2).